Here is a 397-residue protein sequence, read N- to C-terminus: Plasma membrane iron permease (397 aa).

4 consecutive transmembrane segments (helical) span residues 61–81, 92–112, 177–197, and 292–312; these read FTAL…FYAL, IWEG…GFAM, AFPL…YFIY, and GSIL…FLMW. Residues Ser337 and Ser338 each carry the phosphoserine modification. A compositionally biased stretch (polar residues) spans 337-346; that stretch reads SSHTPVQSSS. The disordered stretch occupies residues 337-364; that stretch reads SSHTPVQSSSSEDEFKINSPTDDKGDKA. Residue Thr340 is modified to Phosphothreonine. Ser346, Ser347, and Ser355 each carry phosphoserine. A compositionally biased stretch (basic and acidic residues) spans 349 to 364; it reads DEFKINSPTDDKGDKA. Thr357 carries the post-translational modification Phosphothreonine. Phosphoserine occurs at positions 374, 375, and 376.

It belongs to the oxidase-dependent Fe transporter (OFeT) (TC 9.A.10.1) family.

The protein resides in the membrane. Its function is as follows. Permease for high affinity iron uptake. The polypeptide is Plasma membrane iron permease (fip1) (Schizosaccharomyces pombe (strain 972 / ATCC 24843) (Fission yeast)).